Reading from the N-terminus, the 270-residue chain is ISITFFLLLLNKVNSAEILSFSFPKFVSNQEDLLLQGDALVSSEGELQLTTVENGVPVWNSTGRALYYAPVHIWDNSTGRVASFATSFSFVVKAPVASKSADGIAFFLAPLNNQIHGAGGGLYGLFNSSSYSSSYQIVAVEFDTHTNAWDPNTRHIGIDVNSVKSTKTVTWGWENGEVANVLITYQAATEMLTVSLTYPSNQTSYILSAAVDLKSILPEWVRVGFTATTGLTTQYVETNDVLSWSFTSTLETSDCGAEDNNVHLASYAFI.

The first 15 residues, 1 to 15, serve as a signal peptide directing secretion; the sequence is ISITFFLLLLNKVNS. N-linked (GlcNAc...) asparagine glycans are attached at residues Asn60, Asn76, and Asn127. Mn(2+)-binding residues include Glu141 and Asp143. Asp143, His145, Asn147, and Asp150 together coordinate Ca(2+). Mn(2+) contacts are provided by Asp150 and His155. The N-linked (GlcNAc...) asparagine glycan is linked to Asn201.

The protein belongs to the leguminous lectin family.

Functionally, galNAc-specific lectin. This Styphnolobium japonicum (Japanese pagoda tree) protein is Bark lectin.